A 213-amino-acid chain; its full sequence is High frequency lysogenization protein HflD homolog (213 aa).

Positions 79–126 form a coiled coil; that stretch reads QGLNAELTRYTLSLMVLERKLSSAKGALDTLGNRINGLQRQLEHFDLQ.

It belongs to the HflD family.

It is found in the cytoplasm. It localises to the cell inner membrane. The protein is High frequency lysogenization protein HflD homolog of Shigella flexneri serotype 5b (strain 8401).